The primary structure comprises 172 residues: NADH-quinone oxidoreductase subunit B (172 aa).

[4Fe-4S] cluster contacts are provided by cysteine 46, cysteine 47, cysteine 111, and cysteine 141.

It belongs to the complex I 20 kDa subunit family. As to quaternary structure, NDH-1 is composed of 14 different subunits. Subunits NuoB, C, D, E, F, and G constitute the peripheral sector of the complex. Requires [4Fe-4S] cluster as cofactor.

Its subcellular location is the cell membrane. It catalyses the reaction a quinone + NADH + 5 H(+)(in) = a quinol + NAD(+) + 4 H(+)(out). Functionally, NDH-1 shuttles electrons from NADH, via FMN and iron-sulfur (Fe-S) centers, to quinones in the respiratory chain. The immediate electron acceptor for the enzyme in this species is believed to be a menaquinone. Couples the redox reaction to proton translocation (for every two electrons transferred, four hydrogen ions are translocated across the cytoplasmic membrane), and thus conserves the redox energy in a proton gradient. In Bacillus cytotoxicus (strain DSM 22905 / CIP 110041 / 391-98 / NVH 391-98), this protein is NADH-quinone oxidoreductase subunit B.